Consider the following 64-residue polypeptide: Large ribosomal subunit protein bL35 (64 aa).

The segment at 17–41 (TGSGKVKRERMNGSHNLEHKNRKRT) is disordered. The span at 25–35 (ERMNGSHNLEH) shows a compositional bias: basic and acidic residues.

It belongs to the bacterial ribosomal protein bL35 family.

This chain is Large ribosomal subunit protein bL35, found in Chlorobaculum parvum (strain DSM 263 / NCIMB 8327) (Chlorobium vibrioforme subsp. thiosulfatophilum).